Consider the following 88-residue polypeptide: Acylphosphatase (88 aa).

The 86-residue stretch at 3 to 88 (AARFIFTGVV…IPTTEAFVTG (86 aa)) folds into the Acylphosphatase-like domain. Residues R18 and N36 contribute to the active site.

It belongs to the acylphosphatase family.

It carries out the reaction an acyl phosphate + H2O = a carboxylate + phosphate + H(+). The chain is Acylphosphatase (acyP) from Xanthomonas campestris pv. campestris (strain 8004).